Here is a 130-residue protein sequence, read N- to C-terminus: NADH-quinone oxidoreductase subunit A (130 aa).

3 helical membrane-spanning segments follow: residues 15–35, 67–87, and 95–115; these read AIHV…ATII, FLIA…FAWA, and WVGL…LIYL.

It belongs to the complex I subunit 3 family. As to quaternary structure, NDH-1 is composed of 14 different subunits. Subunits NuoA, H, J, K, L, M, N constitute the membrane sector of the complex.

The protein resides in the cell inner membrane. It catalyses the reaction a quinone + NADH + 5 H(+)(in) = a quinol + NAD(+) + 4 H(+)(out). Functionally, NDH-1 shuttles electrons from NADH, via FMN and iron-sulfur (Fe-S) centers, to quinones in the respiratory chain. The immediate electron acceptor for the enzyme in this species is believed to be ubiquinone. Couples the redox reaction to proton translocation (for every two electrons transferred, four hydrogen ions are translocated across the cytoplasmic membrane), and thus conserves the redox energy in a proton gradient. The protein is NADH-quinone oxidoreductase subunit A of Rhodopseudomonas palustris (strain BisA53).